The following is a 256-amino-acid chain: Leucyl/phenylalanyl-tRNA--protein transferase (256 aa).

This sequence belongs to the L/F-transferase family.

It is found in the cytoplasm. The enzyme catalyses N-terminal L-lysyl-[protein] + L-leucyl-tRNA(Leu) = N-terminal L-leucyl-L-lysyl-[protein] + tRNA(Leu) + H(+). It catalyses the reaction N-terminal L-arginyl-[protein] + L-leucyl-tRNA(Leu) = N-terminal L-leucyl-L-arginyl-[protein] + tRNA(Leu) + H(+). It carries out the reaction L-phenylalanyl-tRNA(Phe) + an N-terminal L-alpha-aminoacyl-[protein] = an N-terminal L-phenylalanyl-L-alpha-aminoacyl-[protein] + tRNA(Phe). Functionally, functions in the N-end rule pathway of protein degradation where it conjugates Leu, Phe and, less efficiently, Met from aminoacyl-tRNAs to the N-termini of proteins containing an N-terminal arginine or lysine. The polypeptide is Leucyl/phenylalanyl-tRNA--protein transferase (Hydrogenovibrio crunogenus (strain DSM 25203 / XCL-2) (Thiomicrospira crunogena)).